The following is a 297-amino-acid chain: 4-hydroxy-tetrahydrodipicolinate synthase (297 aa).

Thr49 provides a ligand contact to pyruvate. Tyr137 serves as the catalytic Proton donor/acceptor. Lys165 acts as the Schiff-base intermediate with substrate in catalysis. A pyruvate-binding site is contributed by Ile208.

The protein belongs to the DapA family. In terms of assembly, homotetramer; dimer of dimers.

The protein localises to the cytoplasm. It carries out the reaction L-aspartate 4-semialdehyde + pyruvate = (2S,4S)-4-hydroxy-2,3,4,5-tetrahydrodipicolinate + H2O + H(+). The protein operates within amino-acid biosynthesis; L-lysine biosynthesis via DAP pathway; (S)-tetrahydrodipicolinate from L-aspartate: step 3/4. In terms of biological role, catalyzes the condensation of (S)-aspartate-beta-semialdehyde [(S)-ASA] and pyruvate to 4-hydroxy-tetrahydrodipicolinate (HTPA). The sequence is that of 4-hydroxy-tetrahydrodipicolinate synthase from Gluconacetobacter diazotrophicus (strain ATCC 49037 / DSM 5601 / CCUG 37298 / CIP 103539 / LMG 7603 / PAl5).